The chain runs to 149 residues: Transcriptional repressor NrdR (149 aa).

Residues 3 to 34 (CPFCQSDDTKVLDTRLIDDGSQVRRRRECVSC) fold into a zinc finger. The 91-residue stretch at 49–139 (PHLIKSDDSR…VYRQFQDIEA (91 aa)) folds into the ATP-cone domain.

It belongs to the NrdR family. Requires Zn(2+) as cofactor.

Negatively regulates transcription of bacterial ribonucleotide reductase nrd genes and operons by binding to NrdR-boxes. This Ruthia magnifica subsp. Calyptogena magnifica protein is Transcriptional repressor NrdR.